The following is a 1260-amino-acid chain: Ankyrin repeat and sterile alpha motif domain-containing protein 1B (1260 aa).

ANK repeat units follow at residues 2-31 (GKDQ…GGIL), 58-87 (SGYT…STNV), 91-120 (KGYF…SHSR), 127-156 (ENET…DPTI), 160-189 (KLET…NLMS), 193-222 (RKHT…DVSC), and 225-254 (EKGS…DANI). A disordered region spans residues 298–326 (HAQEDTAQETRLSSPAQSPSQKTKSETVT). Residues 306–326 (ETRLSSPAQSPSQKTKSETVT) are compositionally biased toward polar residues. Phosphoserine occurs at positions 310, 311, 315, 354, and 365. Disordered stretches follow at residues 368-402 (ELGK…SCGP), 491-513 (PGTG…PSPD), and 556-642 (GCTS…EASL). Residues 372-385 (NGSQSVRTSSTINL) are compositionally biased toward polar residues. The residue at position 504 (Thr504) is a Phosphothreonine. Ser508 and Ser511 each carry phosphoserine. Residues 556–575 (GCTSFTSSPPVSPPTSSVET) are compositionally biased toward low complexity. The segment covering 576–588 (TEIKNEGAEHTDD) has biased composition (basic and acidic residues). Residue Ser739 is modified to Phosphoserine. The interval 754-778 (VNWSKSSTAERSSKDNSERTPSFTS) is disordered. At Thr773 the chain carries Phosphothreonine. A Phosphoserine modification is found at Ser775. SAM domains lie at 810-876 (CPVQ…LPKM) and 884-949 (YHPT…RLHE). Tyr901 carries the post-translational modification Phosphotyrosine. The Nuclear localization signal signature appears at 935 to 938 (HRKR). The tract at residues 946–989 (RLHEDPPQKPPRSITLREPSGNHTPPQLSPSLSQSTYTTGGSLD) is disordered. Low complexity predominate over residues 969–984 (TPPQLSPSLSQSTYTT). A Phosphoserine modification is found at Ser974. Tyr1007 is modified (phosphotyrosine). The region spanning 1056–1213 (IFQSCDYKAF…SFENKPSKPI (158 aa)) is the PID domain. Residues 1197 to 1217 (HSSTLPESFENKPSKPIPKPR) form a disordered region.

As to quaternary structure, interacts with EPHA8. Isoform 2 interacts with COIL. Isoform 3 interacts with DLG4. Post-translationally, nuclear translocation of isoform 3 requires an NMDAR-dependent proteolytic cleavage. A 35 kDa N-terminal form shuttles to the nucleus. As to expression, isoform 3 is brain specific and highly enriched in the postsynaptic densities (PSDs), especially in cortical, striatal and hippocampal PSDs.

It is found in the cytoplasm. Its subcellular location is the nucleus. The protein localises to the postsynaptic density. It localises to the cell projection. The protein resides in the dendritic spine. It is found in the cajal body. In terms of biological role, isoform 2 may participate in the regulation of nucleoplasmic coilin protein interactions in neuronal and transformed cells. Functionally, isoform 3 can regulate global protein synthesis by altering nucleolar numbers. The protein is Ankyrin repeat and sterile alpha motif domain-containing protein 1B (Anks1b) of Rattus norvegicus (Rat).